Here is a 693-residue protein sequence, read N- to C-terminus: Protein-glutamine gamma-glutamyltransferase E (693 aa).

Tyr111 carries the phosphotyrosine modification. Phosphothreonine is present on Thr112. 4 residues coordinate Ca(2+): Ala222, Asn225, Asn227, and Asp228. The active site involves Cys273. Residues Asp302, Asp304, Asn306, Ser308, and Asp325 each contribute to the Ca(2+) site. Residues His331 and Asp354 contribute to the active site. Residues Asn394, Thr416, Glu444, and Glu449 each contribute to the Ca(2+) site. The interval Lys455–Ser482 is disordered.

Belongs to the transglutaminase superfamily. Transglutaminase family. As to quaternary structure, consists of two polypeptide chains, which are synthesized as a precursor form of a single polypeptide. Ca(2+) is required as a cofactor. Post-translationally, activated by proteolytic processing. In vitro activation is commonly achieved by cleavage with dispase, a neutral bacterial protease. Physiological activation may be catalyzed by CTSL and, to a lesser extent, by CTSS.

The protein resides in the cytoplasm. It carries out the reaction L-glutaminyl-[protein] + L-lysyl-[protein] = [protein]-L-lysyl-N(6)-5-L-glutamyl-[protein] + NH4(+). Catalyzes the calcium-dependent formation of isopeptide cross-links between glutamine and lysine residues in various proteins, as well as the conjugation of polyamines to proteins. Involved in the formation of the cornified envelope (CE), a specialized component consisting of covalent cross-links of proteins beneath the plasma membrane of terminally differentiated keratinocytes. Catalyzes small proline-rich proteins and LOR cross-linking to form small interchain oligomers, which are further cross-linked by TGM1 onto the growing CE scaffold. In hair follicles, involved in cross-linking structural proteins to hardening the inner root sheath. This Rattus norvegicus (Rat) protein is Protein-glutamine gamma-glutamyltransferase E (Tgm3).